The sequence spans 92 residues: Small ribosomal subunit protein uS19 (92 aa).

It belongs to the universal ribosomal protein uS19 family.

In terms of biological role, protein S19 forms a complex with S13 that binds strongly to the 16S ribosomal RNA. The polypeptide is Small ribosomal subunit protein uS19 (Shigella boydii serotype 18 (strain CDC 3083-94 / BS512)).